We begin with the raw amino-acid sequence, 636 residues long: Topoisomerase I damage affected protein 7 (636 aa).

Over residues M1–I18 the composition is skewed to polar residues. Disordered regions lie at residues M1–S33, T87–P109, N246–N271, P299–T326, and Q339–P362. N-linked (GlcNAc...) asparagine glycosylation occurs at N4. 2 stretches are compositionally biased toward low complexity: residues S19–S33 and T87–D108. The N-linked (GlcNAc...) asparagine glycan is linked to N257. The chain crosses the membrane as a helical span at residues I457 to F477. A glycan (N-linked (GlcNAc...) asparagine) is linked at N492. The span at Q510–F541 shows a compositional bias: polar residues. Residues Q510–P551 form a disordered region. K512 participates in a covalent cross-link: Glycyl lysine isopeptide (Lys-Gly) (interchain with G-Cter in ubiquitin). Residues N557, N562, and N626 are each glycosylated (N-linked (GlcNAc...) asparagine). A Phosphoserine modification is found at S628.

This sequence belongs to the TDA7 family.

Its subcellular location is the vacuole membrane. This Saccharomyces cerevisiae (strain ATCC 204508 / S288c) (Baker's yeast) protein is Topoisomerase I damage affected protein 7 (TDA7).